The chain runs to 321 residues: Olfactory receptor 52N4 (321 aa).

Over methionine 1 to leucine 27 the chain is Extracellular. Asparagine 5 carries N-linked (GlcNAc...) asparagine glycosylation. Residues tryptophan 28–leucine 48 form a helical membrane-spanning segment. Topologically, residues tyrosine 49–alanine 56 are cytoplasmic. The helical transmembrane segment at leucine 57 to serine 77 threads the bilayer. Residues serine 78–valine 101 are Extracellular-facing. Cysteine 99 and cysteine 191 are oxidised to a cystine. The helical transmembrane segment at glutamine 102–leucine 122 threads the bilayer. At aspartate 123–proline 141 the chain is on the cytoplasmic side. The helical transmembrane segment at valine 142–threonine 162 threads the bilayer. Residues phenylalanine 163 to alanine 198 lie on the Extracellular side of the membrane. A helical membrane pass occupies residues isoleucine 199–serine 219. Topologically, residues tyrosine 220–alanine 239 are cytoplasmic. Residues phenylalanine 240 to serine 260 traverse the membrane as a helical segment. Topologically, residues phenylalanine 261 to histidine 276 are extracellular. The chain crosses the membrane as a helical span at residues isoleucine 277–valine 297. At lysine 298–methionine 321 the chain is on the cytoplasmic side.

It belongs to the G-protein coupled receptor 1 family.

Its subcellular location is the cell membrane. Functionally, odorant receptor. The sequence is that of Olfactory receptor 52N4 (OR52N4) from Homo sapiens (Human).